A 270-amino-acid polypeptide reads, in one-letter code: 4-hydroxy-tetrahydrodipicolinate reductase (270 aa).

Residues 11–16 and E37 contribute to the NAD(+) site; that span reads GAGGRM. An NADP(+)-binding site is contributed by R38. NAD(+) contacts are provided by residues 101-103 and 125-128; these read GTT and APNM. H158 acts as the Proton donor/acceptor in catalysis. H159 serves as a coordination point for (S)-2,3,4,5-tetrahydrodipicolinate. The active-site Proton donor is the K162. 168-169 contributes to the (S)-2,3,4,5-tetrahydrodipicolinate binding site; it reads GT.

It belongs to the DapB family.

It is found in the cytoplasm. It catalyses the reaction (S)-2,3,4,5-tetrahydrodipicolinate + NAD(+) + H2O = (2S,4S)-4-hydroxy-2,3,4,5-tetrahydrodipicolinate + NADH + H(+). It carries out the reaction (S)-2,3,4,5-tetrahydrodipicolinate + NADP(+) + H2O = (2S,4S)-4-hydroxy-2,3,4,5-tetrahydrodipicolinate + NADPH + H(+). The protein operates within amino-acid biosynthesis; L-lysine biosynthesis via DAP pathway; (S)-tetrahydrodipicolinate from L-aspartate: step 4/4. Functionally, catalyzes the conversion of 4-hydroxy-tetrahydrodipicolinate (HTPA) to tetrahydrodipicolinate. The protein is 4-hydroxy-tetrahydrodipicolinate reductase of Shewanella putrefaciens (strain CN-32 / ATCC BAA-453).